The primary structure comprises 87 residues: Small ribosomal subunit protein bS20 (87 aa).

This sequence belongs to the bacterial ribosomal protein bS20 family.

Functionally, binds directly to 16S ribosomal RNA. The protein is Small ribosomal subunit protein bS20 of Sphingopyxis alaskensis (strain DSM 13593 / LMG 18877 / RB2256) (Sphingomonas alaskensis).